The primary structure comprises 392 residues: 4-hydroxy-3-methylbut-2-en-1-yl diphosphate synthase (flavodoxin) (392 aa).

[4Fe-4S] cluster-binding residues include Cys280, Cys283, Cys315, and Glu322. A compositionally biased stretch (basic and acidic residues) spans 371–380; it reads TEKGSDHCSE. Positions 371–392 are disordered; it reads TEKGSDHCSETTRSGSPVVTVN. Polar residues predominate over residues 381-392; that stretch reads TTRSGSPVVTVN.

Belongs to the IspG family. [4Fe-4S] cluster is required as a cofactor.

The enzyme catalyses (2E)-4-hydroxy-3-methylbut-2-enyl diphosphate + oxidized [flavodoxin] + H2O + 2 H(+) = 2-C-methyl-D-erythritol 2,4-cyclic diphosphate + reduced [flavodoxin]. The protein operates within isoprenoid biosynthesis; isopentenyl diphosphate biosynthesis via DXP pathway; isopentenyl diphosphate from 1-deoxy-D-xylulose 5-phosphate: step 5/6. Functionally, converts 2C-methyl-D-erythritol 2,4-cyclodiphosphate (ME-2,4cPP) into 1-hydroxy-2-methyl-2-(E)-butenyl 4-diphosphate. This is 4-hydroxy-3-methylbut-2-en-1-yl diphosphate synthase (flavodoxin) from Mycobacterium leprae (strain Br4923).